Consider the following 239-residue polypeptide: Small ribosomal subunit protein uS3 (239 aa).

The 69-residue stretch at 39–107 folds into the KH type-2 domain; the sequence is VRQVLRKKMS…SVHINVIEVR (69 aa). The segment at 217–239 is disordered; it reads KQDDISRGDRNADRSSRRSREVR.

It belongs to the universal ribosomal protein uS3 family. Part of the 30S ribosomal subunit. Forms a tight complex with proteins S10 and S14.

Binds the lower part of the 30S subunit head. Binds mRNA in the 70S ribosome, positioning it for translation. The chain is Small ribosomal subunit protein uS3 from Xylella fastidiosa (strain 9a5c).